A 100-amino-acid chain; its full sequence is Vesicle-associated membrane protein 3 (100 aa).

An N-acetylserine modification is found at Ser2. Topologically, residues 2–77 (STGPTAATGS…KRKYWWKNCK (76 aa)) are cytoplasmic. The region spanning 14 to 74 (RLQQTQNQVD…AKLKRKYWWK (61 aa)) is the v-SNARE coiled-coil homology domain. Residues Lys66, Lys68, and Lys77 each participate in a glycyl lysine isopeptide (Lys-Gly) (interchain with G-Cter in ubiquitin) cross-link. Residues 78–98 (MWAIGITVLVIFIIIIIVWVV) traverse the membrane as a helical; Anchor for type IV membrane protein segment. Residues 99–100 (SS) are Vesicular-facing.

This sequence belongs to the synaptobrevin family. Interacts with POPDC1 (via the C-terminus cytoplasmic tail). Interacts with BCAP31; involved in VAMP3 export from the endoplasmic reticulum. Interacts with BAIAP3; this interaction is increased in the presence of calcium. Interacts with PICALM. Ubiquitinated by RNF167 at Lys-66, Lys-68 and Lys-77, regulating the recycling endosome pathway. Post-translationally, (Microbial infection) Targeted and hydrolyzed by C.botulinum neurotoxin type B (BoNT/B, botB) which hydrolyzes the 59-Gln-|-Phe-60 bond and probably inhibits neurotransmitter release. In terms of processing, (Microbial infection) Targeted and hydrolyzed by C.botulinum neurotoxin type D (BoNT/D, botD) which hydrolyzes the 42-Lys-|-Leu-43 bond and probably inhibits neurotransmitter release. Note that humans are not known to be infected by C.botulinum type D. (Microbial infection) Targeted and hydrolyzed by C.botulinum neurotoxin type F (BoNT/F, botF) which hydrolyzes the 41-Gln-|-Lys-42 bond and probably inhibits neurotransmitter release.

Its subcellular location is the early endosome membrane. It localises to the recycling endosome membrane. The protein localises to the synapse. The protein resides in the synaptosome. Functionally, SNARE involved in vesicular transport from the late endosomes to the trans-Golgi network. This Homo sapiens (Human) protein is Vesicle-associated membrane protein 3 (VAMP3).